A 721-amino-acid chain; its full sequence is Polyribonucleotide nucleotidyltransferase (721 aa).

Residues D495 and D501 each coordinate Mg(2+). The region spanning 562–621 is the KH domain; sequence PRLLSFRIDPELIGTVIGPGGRTIKGITERTNTKIDIEDSGIVTIASHDGAAADEAQKII. Residues 631-699 enclose the S1 motif domain; that stretch reads GEVFSGSITR…NRGRINLTLR (69 aa). A disordered region spans residues 698–721; the sequence is LRGVPQSGDGAGEEPQPTPVAPLS.

The protein belongs to the polyribonucleotide nucleotidyltransferase family. Requires Mg(2+) as cofactor.

Its subcellular location is the cytoplasm. The enzyme catalyses RNA(n+1) + phosphate = RNA(n) + a ribonucleoside 5'-diphosphate. Its function is as follows. Involved in mRNA degradation. Catalyzes the phosphorolysis of single-stranded polyribonucleotides processively in the 3'- to 5'-direction. The polypeptide is Polyribonucleotide nucleotidyltransferase (Parasynechococcus marenigrum (strain WH8102)).